Consider the following 610-residue polypeptide: Glutamine--fructose-6-phosphate aminotransferase [isomerizing] (610 aa).

Cysteine 2 (nucleophile; for GATase activity) is an active-site residue. In terms of domain architecture, Glutamine amidotransferase type-2 spans 2 to 218; it reads CGIVGAVAQR…EGDIAEITRR (217 aa). SIS domains lie at 278 to 426 and 459 to 600; these read IVDS…VKGH and LAED…VDQP. Residue lysine 605 is the For Fru-6P isomerization activity of the active site.

As to quaternary structure, homodimer.

The protein resides in the cytoplasm. It carries out the reaction D-fructose 6-phosphate + L-glutamine = D-glucosamine 6-phosphate + L-glutamate. Functionally, catalyzes the first step in hexosamine metabolism, converting fructose-6P into glucosamine-6P using glutamine as a nitrogen source. The chain is Glutamine--fructose-6-phosphate aminotransferase [isomerizing] from Haemophilus influenzae (strain ATCC 51907 / DSM 11121 / KW20 / Rd).